We begin with the raw amino-acid sequence, 124 residues long: Small ribosomal subunit protein bS6 (124 aa).

A disordered region spans residues 96-124; sequence ETGPSPMMKEVQREEAKKAAAAQPAEAQA. Low complexity predominate over residues 114-124; that stretch reads AAAAQPAEAQA.

This sequence belongs to the bacterial ribosomal protein bS6 family.

Functionally, binds together with bS18 to 16S ribosomal RNA. This is Small ribosomal subunit protein bS6 from Burkholderia orbicola (strain AU 1054).